We begin with the raw amino-acid sequence, 405 residues long: Riboflavin biosynthesis protein RibBA (405 aa).

The interval 1–205 is DHBP synthase; the sequence is MEEIKLNTIE…IKDLIAYRLK (205 aa). D-ribulose 5-phosphate contacts are provided by residues 30–31, D35, 144–148, and E168; these read RE and RAGHT. E31 is a binding site for Mg(2+). H147 contributes to the Mg(2+) binding site. The GTP cyclohydrolase II stretch occupies residues 206-405; the sequence is QESIVEKGVE…RMGHELHNIK (200 aa). GTP is bound at residue 256–260; sequence RMHSS. C261, C272, and C274 together coordinate Zn(2+). GTP is bound by residues Q277, 299–301, and T321; that span reads EGR. The Proton acceptor; for GTP cyclohydrolase activity role is filled by D333. R335 acts as the Nucleophile; for GTP cyclohydrolase activity in catalysis. Residues T356 and K361 each coordinate GTP.

In the N-terminal section; belongs to the DHBP synthase family. The protein in the C-terminal section; belongs to the GTP cyclohydrolase II family. It depends on Mg(2+) as a cofactor. Mn(2+) serves as cofactor. Zn(2+) is required as a cofactor.

The catalysed reaction is D-ribulose 5-phosphate = (2S)-2-hydroxy-3-oxobutyl phosphate + formate + H(+). It catalyses the reaction GTP + 4 H2O = 2,5-diamino-6-hydroxy-4-(5-phosphoribosylamino)-pyrimidine + formate + 2 phosphate + 3 H(+). It participates in cofactor biosynthesis; riboflavin biosynthesis; 2-hydroxy-3-oxobutyl phosphate from D-ribulose 5-phosphate: step 1/1. The protein operates within cofactor biosynthesis; riboflavin biosynthesis; 5-amino-6-(D-ribitylamino)uracil from GTP: step 1/4. Its function is as follows. Catalyzes the conversion of D-ribulose 5-phosphate to formate and 3,4-dihydroxy-2-butanone 4-phosphate. Functionally, catalyzes the conversion of GTP to 2,5-diamino-6-ribosylamino-4(3H)-pyrimidinone 5'-phosphate (DARP), formate and pyrophosphate. The sequence is that of Riboflavin biosynthesis protein RibBA from Porphyromonas gingivalis (strain ATCC 33277 / DSM 20709 / CIP 103683 / JCM 12257 / NCTC 11834 / 2561).